The following is a 369-amino-acid chain: Ribonuclease 3 (369 aa).

Residues 6–142 (IGFVQSSINY…IIGAVAADCD (137 aa)) enclose the RNase III domain. Glu-46 is a Mg(2+) binding site. Asp-50 is a catalytic residue. Residues Asp-128 and Glu-131 each coordinate Mg(2+). Glu-131 is an active-site residue. The DRBM domain maps to 272–341 (NPASTLHELF…SLKLLKFIAK (70 aa)).

Belongs to the ribonuclease III family. In terms of assembly, homodimer. Mg(2+) is required as a cofactor.

The protein resides in the cytoplasm. The catalysed reaction is Endonucleolytic cleavage to 5'-phosphomonoester.. Digests double-stranded RNA. Involved in the processing of primary rRNA transcript to yield the immediate precursors to the large and small rRNAs (23S and 16S). Processes some mRNAs, and tRNAs when they are encoded in the rRNA operon. Processes pre-crRNA and tracrRNA of type II CRISPR loci if present in the organism. In Treponema succinifaciens (strain ATCC 33096 / DSM 2489 / 6091), this protein is Ribonuclease 3 (rnc).